A 125-amino-acid polypeptide reads, in one-letter code: Holo-[acyl-carrier-protein] synthase (125 aa).

Mg(2+) is bound by residues aspartate 8 and glutamate 57.

Belongs to the P-Pant transferase superfamily. AcpS family. The cofactor is Mg(2+).

Its subcellular location is the cytoplasm. It catalyses the reaction apo-[ACP] + CoA = holo-[ACP] + adenosine 3',5'-bisphosphate + H(+). Its function is as follows. Transfers the 4'-phosphopantetheine moiety from coenzyme A to a Ser of acyl-carrier-protein. The sequence is that of Holo-[acyl-carrier-protein] synthase from Koribacter versatilis (strain Ellin345).